A 304-amino-acid chain; its full sequence is MYQYYPKQCHGEFIEPTYYLISQAWNFKYFRDYLDSFANKLKLVYVGLIDINEYDYIDDPTHVYIFCQSITKELLEKKFNKILLNTEQLSIPKYFDIIKNYLKHLTIIDYSIENIALINDPKVIHIPYQYKETEIAVLKKYYQEIPKQYDVAYCGTMSPRRRLILDQLKSNGVVVMEICQSKWGQERDMLIASCKMLINIHHSDNFNVYESFRCDRWAFAQMPVVSEDSIHDDFLDMKYYSVIKFCPYDKIVDTTLQFLSNVNYPTEEIIETIHTIRYQQLDTAVKQLNSLWNPPHHDDKLLRV.

It belongs to the mimivirus L137 family.

This is an uncharacterized protein from Acanthamoeba polyphaga mimivirus (APMV).